The sequence spans 609 residues: Albumin (609 aa).

Residues 1 to 18 (MKWVTFISLLFLFSSAYS) form the signal peptide. The propeptide occupies 19-24 (RGVFRR). 3 Albumin domains span residues 19 to 210 (RGVF…DELR), 211 to 403 (DEGK…EFKP), and 404 to 601 (LVEE…KLVA). A Cu cation-binding site is contributed by histidine 27. Residue serine 29 is modified to Phosphoserine; by FAM20C. Glutamate 30 lines the Ca(2+) pocket. Residue lysine 36 is glycosylated (N-linked (Glc) (glycation) lysine). Aspartate 37 serves as a coordination point for Ca(2+). An N-linked (Glc) (glycation) lysine; in vitro glycan is attached at lysine 75. Residues cysteine 77 and cysteine 86 are joined by a disulfide bond. 2 positions are modified to phosphoserine; by FAM20C: serine 82 and serine 89. Histidine 91 serves as a coordination point for Zn(2+). Cystine bridges form between cysteine 99–cysteine 115, cysteine 114–cysteine 125, cysteine 148–cysteine 193, and cysteine 192–cysteine 201. At threonine 107 the chain carries Phosphothreonine; by FAM20C. 2 N-linked (Glc) (glycation) lysine; in vitro glycosylation sites follow: lysine 161 and lysine 186. A glycan (N-linked (Glc) (glycation) lysine; in vitro) is linked at lysine 223. Cystine bridges form between cysteine 224–cysteine 270 and cysteine 269–cysteine 277. Lysine 229 is subject to N6-succinyllysine. The N-linked (Glc) (glycation) lysine; in vitro glycan is linked to lysine 249. Lysine 257 carries N-linked (Glc) (glycation) lysine glycosylation. Lysine 264 is a binding site for (4Z,15Z)-bilirubin IXalpha. Glutamate 268 is a binding site for Ca(2+). Zn(2+)-binding residues include histidine 271 and aspartate 273. Ca(2+) is bound by residues aspartate 273, glutamate 276, aspartate 279, and aspartate 283. 2 cysteine pairs are disulfide-bonded: cysteine 289/cysteine 303 and cysteine 302/cysteine 313. Residue serine 297 is modified to Phosphoserine. A glycan (N-linked (Glc) (glycation) lysine; in vitro) is linked at lysine 300. Lysine 305 carries an N-linked (Glc) (glycation) lysine glycan. Residue lysine 337 is glycosylated (N-linked (Glc) (glycation) lysine; in vitro). 2 disulfides stabilise this stretch: cysteine 340/cysteine 385 and cysteine 384/cysteine 393. A glycan (N-linked (Glc) (glycation) lysine) is linked at lysine 341. The N-linked (GlcNAc...) asparagine; in variant Redhill glycan is linked to asparagine 342. The N-linked (Glc) (glycation) lysine; in vitro glycan is linked to lysine 347. N-linked (Glc) (glycation) lysine glycosylation occurs at lysine 375. Lysine 402 and lysine 437 each carry an N-linked (Glc) (glycation) lysine; in vitro glycan. 4 disulfide bridges follow: cysteine 416-cysteine 462, cysteine 461-cysteine 472, cysteine 485-cysteine 501, and cysteine 500-cysteine 511. Serine 443 is subject to Phosphoserine. Phosphothreonine is present on residues threonine 444 and threonine 446. Lysine 460 is subject to N6-succinyllysine. Residue lysine 463 is glycosylated (N-linked (Glc) (glycation) lysine). Lysine 468 carries an N-linked (Glc) (glycation) lysine; in vitro glycan. Serine 513 carries the phosphoserine modification. N-linked (GlcNAc...) asparagine; in variant Casebrook glycosylation is present at aspartate 518. Disulfide bonds link cysteine 538–cysteine 583 and cysteine 582–cysteine 591. Lysine 543 bears the N6-succinyllysine mark. The N-linked (Glc) (glycation) lysine glycan is linked to lysine 549. At lysine 558 the chain carries N6-methyllysine; alternate. Residue lysine 558 is glycosylated (N-linked (Glc) (glycation) lysine; alternate). Residues lysine 560 and lysine 569 are each glycosylated (N-linked (Glc) (glycation) lysine; in vitro). Lysine 588 carries the post-translational modification N6-succinyllysine. An N-linked (Glc) (glycation) lysine; in vitro glycan is attached at lysine 597.

Belongs to the ALB/AFP/VDB family. As to quaternary structure, interacts with FCGRT; this interaction regulates ALB homeostasis. Interacts with TASOR. In plasma, occurs in a covalently-linked complex with chromophore-bound alpha-1-microglobulin with molar ratio 1:2 and 1:1; this interaction does not prevent fatty acid binding to ALB. Post-translationally, kenitra variant is partially O-glycosylated at Thr-620. It has two new disulfide bonds Cys-600 to Cys-602 and Cys-601 to Cys-606. Glycated in diabetic patients. In terms of processing, phosphorylated by FAM20C in the extracellular medium. Post-translationally, acetylated on Lys-223 by acetylsalicylic acid. As to expression, plasma.

It is found in the secreted. Binds water, Ca(2+), Na(+), K(+), fatty acids, hormones, bilirubin and drugs. Its main function is the regulation of the colloidal osmotic pressure of blood. Major zinc transporter in plasma, typically binds about 80% of all plasma zinc. Major calcium and magnesium transporter in plasma, binds approximately 45% of circulating calcium and magnesium in plasma. Potentially has more than two calcium-binding sites and might additionally bind calcium in a non-specific manner. The shared binding site between zinc and calcium at residue Asp-273 suggests a crosstalk between zinc and calcium transport in the blood. The rank order of affinity is zinc &gt; calcium &gt; magnesium. Binds to the bacterial siderophore enterobactin and inhibits enterobactin-mediated iron uptake of E.coli from ferric transferrin, and may thereby limit the utilization of iron and growth of enteric bacteria such as E.coli. Does not prevent iron uptake by the bacterial siderophore aerobactin. This Homo sapiens (Human) protein is Albumin (ALB).